Consider the following 517-residue polypeptide: General transcription factor IIF subunit 1 (517 aa).

Residue Ala2 is modified to N-acetylalanine. Position 156 is a phosphothreonine (Thr156). The interval 178–458 (QQRRLKDQDQ…SGDVQVTEDA (281 aa)) is disordered. The segment covering 210 to 225 (LEDDLEMSSDDSEASG) has biased composition (acidic residues). Phosphoserine occurs at positions 217, 218, 221, and 224. Residues 232–251 (PKAKKKAPPSKGGRKKKKKK) are compositionally biased toward basic residues. 2 stretches are compositionally biased toward acidic residues: residues 255-270 (DEAF…EGQE) and 303-325 (EQSE…EEEE). Thr331 is modified (phosphothreonine). Acidic residues predominate over residues 343–355 (EESDSSEESDIDS). Residues 364-374 (AKKKTPPKRER) are compositionally biased toward basic residues. Phosphoserine occurs at positions 377, 380, 381, and 385. A compositionally biased stretch (low complexity) spans 377–391 (SGGSSRGNSRPGTPS). The residue at position 389 (Thr389) is a Phosphothreonine. Ser391 carries the post-translational modification Phosphoserine. A compositionally biased stretch (polar residues) spans 392–401 (TEAGSTSSTL). Lys407 bears the N6-acetyllysine mark. Over residues 428 to 452 (GPQSLSGKSTPQPQSGKSTPSSGDV) the composition is skewed to polar residues. A phosphoserine mark is found at Ser431, Ser433, and Ser436. Phosphothreonine is present on residues Thr437 and Thr446. Ser449 is modified (phosphoserine).

The protein belongs to the TFIIF alpha subunit family. In terms of assembly, heterodimer of an alpha and a beta subunit. Interacts with GTF2F2, CTDP1, TAF6/TAFII80 and URI1. Interacts with GTF2B (via C-terminus and preferentially via acetylated form); this interaction prevents binding of GTF2B to GTF2F2. Part of TBP-based Pol II pre-initiation complex (PIC), in which Pol II core assembles with general transcription factors and other specific initiation factors including GTF2E1, GTF2E2, GTF2F1, GTF2F2, TCEA1, ERCC2, ERCC3, GTF2H2, GTF2H3, GTF2H4, GTF2H5, GTF2A1, GTF2A2, GTF2B and TBP; this large multi-subunit PIC complex mediates DNA unwinding and targets Pol II core to the transcription start site where the first phosphodiester bond forms. In terms of processing, phosphorylated on Ser and other residues by TAF1 and casein kinase II-like kinases.

Its subcellular location is the nucleus. Functionally, TFIIF is a general transcription initiation factor that binds to RNA polymerase II and helps to recruit it to the initiation complex in collaboration with TFIIB. It promotes transcription elongation. The sequence is that of General transcription factor IIF subunit 1 (GTF2F1) from Bos taurus (Bovine).